The chain runs to 1169 residues: ATP-dependent helicase/deoxyribonuclease subunit B (1169 aa).

Residues 1–296 (MTLRIVSGRS…QHVEANFANM (296 aa)) enclose the UvrD-like helicase ATP-binding domain. Position 8-15 (8-15 (GRSGTGKS)) interacts with ATP. Residues 276–582 (YYTQRFQSED…EFSRIPPTLD (307 aa)) enclose the UvrD-like helicase C-terminal domain. 4 residues coordinate [4Fe-4S] cluster: Cys804, Cys1129, Cys1132, and Cys1138.

It belongs to the helicase family. AddB/RexB type 1 subfamily. As to quaternary structure, heterodimer of AddA and AddB. Mg(2+) serves as cofactor. The cofactor is [4Fe-4S] cluster.

Functionally, the heterodimer acts as both an ATP-dependent DNA helicase and an ATP-dependent, dual-direction single-stranded exonuclease. Recognizes the chi site generating a DNA molecule suitable for the initiation of homologous recombination. The AddB subunit has 5' -&gt; 3' nuclease activity but not helicase activity. This is ATP-dependent helicase/deoxyribonuclease subunit B from Lysinibacillus sphaericus (strain C3-41).